We begin with the raw amino-acid sequence, 364 residues long: NADH-quinone oxidoreductase subunit H (364 aa).

A run of 8 helical transmembrane segments spans residues 15–35 (LLVL…IAFL), 84–104 (AVFI…WAAI), 123–143 (VGVL…IMGG), 169–189 (IGFV…TTIV), 206–226 (YFPL…SALA), 257–277 (LFML…TILF), 302–322 (LSGL…FALV), and 341–361 (IFLP…TFVG).

Belongs to the complex I subunit 1 family. In terms of assembly, NDH-1 is composed of 14 different subunits. Subunits NuoA, H, J, K, L, M, N constitute the membrane sector of the complex.

It is found in the cell inner membrane. The enzyme catalyses a quinone + NADH + 5 H(+)(in) = a quinol + NAD(+) + 4 H(+)(out). NDH-1 shuttles electrons from NADH, via FMN and iron-sulfur (Fe-S) centers, to quinones in the respiratory chain. The immediate electron acceptor for the enzyme in this species is believed to be ubiquinone. Couples the redox reaction to proton translocation (for every two electrons transferred, four hydrogen ions are translocated across the cytoplasmic membrane), and thus conserves the redox energy in a proton gradient. This subunit may bind ubiquinone. The sequence is that of NADH-quinone oxidoreductase subunit H from Hyphomonas neptunium (strain ATCC 15444).